A 998-amino-acid chain; its full sequence is Sensor histidine kinase AruS (998 aa).

Disordered regions lie at residues 27 to 82 (ERRP…HARA), 154 to 198 (RQAG…LPAG), and 224 to 245 (RQHPALAGRQRARLSAPRRQPR). A compositionally biased stretch (low complexity) spans 40 to 49 (GEAAVRRAGL). Residues 161–183 (HRLHRPRTTHRHAVRRAPGRRRE) are compositionally biased toward basic residues. Helical transmembrane passes span 264–284 (VLLFSLCFTVLAGAVQLFFEY) and 395–415 (ASLLWMGSFLCGLAVALSWLF). The HAMP domain occupies 417-473 (SLVTRHLWRMSEFAGHIAEGDLQQPLRLDKVDRERDEIDAVAAALEDMRQALRTDRR). A Histidine kinase domain is found at 513–734 (TMSHEIRTPL…TFWFEIELAL (222 aa)). Residue His516 is modified to Phosphohistidine; by autocatalysis. The Response regulatory domain occupies 751–869 (EVLLVEDVAL…ELRRALGEVG (119 aa)). Asp800 carries the 4-aspartylphosphate modification. In terms of domain architecture, HPt spans 894–987 (GRHKLAGLLG…RDGAEALRRA (94 aa)). His933 is subject to Phosphohistidine.

Autophosphorylated. Activation may require a sequential transfer of a phosphate group from a His in the primary transmitter domain, to an Asp in the receiver domain and to a His in the secondary transmitter domain.

It localises to the cell membrane. The enzyme catalyses ATP + protein L-histidine = ADP + protein N-phospho-L-histidine.. It functions in the pathway amino-acid degradation; L-arginine degradation [regulation]. In terms of biological role, member of the two-component regulatory system AruS/AruR, which is involved in the regulation of the arginine transaminase (ATA) pathway in response to exogeneous L-arginine. Probably functions as a sensor kinase that phosphorylates AruR. The protein is Sensor histidine kinase AruS (aruS) of Pseudomonas aeruginosa (strain ATCC 15692 / DSM 22644 / CIP 104116 / JCM 14847 / LMG 12228 / 1C / PRS 101 / PAO1).